The primary structure comprises 56 residues: MPQDQQRKKQFDPNPNRDDSQRKTPVDKEIDDIIDEADEIVKRNKEQAKKKQPSRQ.

A compositionally biased stretch (basic and acidic residues) spans 1-28 (MPQDQQRKKQFDPNPNRDDSQRKTPVDK). Residues 1–33 (MPQDQQRKKQFDPNPNRDDSQRKTPVDKEIDDI) are disordered. Q56 is modified (deamidated glutamine). An Isoglutamyl lysine isopeptide (Gln-Lys) (interchain with K-? in acceptor proteins) cross-link involves residue Q56.

The protein belongs to the ubiquitin-like protein UBact family. In terms of processing, may be modified by deamidation of its C-terminal glutamine to glutamate by the adjacently encoded deamidase. This could be a prerequisite to the subsequent conjugation, as shown in the other prokaryotic ubiquitin-like protein Pup.

Functionally, may function as a protein modifier covalently attached to lysine residues of substrate proteins. This may serve to target the modified proteins for degradation by proteasomes. In Yanofskybacteria sp. (strain GW2011_GWA1_39_13), this protein is Prokaryotic ubiquitin-like protein UBact.